The following is a 132-amino-acid chain: Small ribosomal subunit protein uS8 (132 aa).

Belongs to the universal ribosomal protein uS8 family. In terms of assembly, part of the 30S ribosomal subunit. Contacts proteins S5 and S12.

Its function is as follows. One of the primary rRNA binding proteins, it binds directly to 16S rRNA central domain where it helps coordinate assembly of the platform of the 30S subunit. The polypeptide is Small ribosomal subunit protein uS8 (Flavobacterium johnsoniae (strain ATCC 17061 / DSM 2064 / JCM 8514 / BCRC 14874 / CCUG 350202 / NBRC 14942 / NCIMB 11054 / UW101) (Cytophaga johnsonae)).